A 348-amino-acid polypeptide reads, in one-letter code: Phosphate acyltransferase (348 aa).

The protein belongs to the PlsX family. As to quaternary structure, homodimer. Probably interacts with PlsY.

The protein localises to the cytoplasm. The enzyme catalyses a fatty acyl-[ACP] + phosphate = an acyl phosphate + holo-[ACP]. Its pathway is lipid metabolism; phospholipid metabolism. Its function is as follows. Catalyzes the reversible formation of acyl-phosphate (acyl-PO(4)) from acyl-[acyl-carrier-protein] (acyl-ACP). This enzyme utilizes acyl-ACP as fatty acyl donor, but not acyl-CoA. This Francisella tularensis subsp. tularensis (strain FSC 198) protein is Phosphate acyltransferase.